We begin with the raw amino-acid sequence, 376 residues long: Lipid-A-disaccharide synthase (376 aa).

The protein belongs to the LpxB family.

It catalyses the reaction a lipid X + a UDP-2-N,3-O-bis[(3R)-3-hydroxyacyl]-alpha-D-glucosamine = a lipid A disaccharide + UDP + H(+). It functions in the pathway bacterial outer membrane biogenesis; LPS lipid A biosynthesis. Its function is as follows. Condensation of UDP-2,3-diacylglucosamine and 2,3-diacylglucosamine-1-phosphate to form lipid A disaccharide, a precursor of lipid A, a phosphorylated glycolipid that anchors the lipopolysaccharide to the outer membrane of the cell. The chain is Lipid-A-disaccharide synthase from Hydrogenovibrio crunogenus (strain DSM 25203 / XCL-2) (Thiomicrospira crunogena).